The chain runs to 398 residues: MTIDLSLKSNQQKTIAVLGASYAGHRAIQVLVASLPEDWRVVVLERNTHANHLYAFPRMSVVRGHEQKVFIPYTNMFKPALDRRDQHVLLHANVLELDQEQRRVSYELIDDKQSGVQWLHWDFLVYALGSHLPDPINVWSNSEHVNTHDGSKMMGVKWLRDAQDRIEKAESIVIVGGGALGVQLATDIAVTYGSSKKVTLTHSRPQLLPRFDPWMHEKTAARLQELGVELALGSRVDLSTVSEDKKRFKLLDGRELQGDLTLFCLGQTPNTSLLGASSLNDSGMAKVEPTLQLSANERIFVIGDAADAFGAINAGHTAWDQAEVAAKNILALIDNKGQAMKLEEYKPTPPAIKVSLGIDRAIRQTMAGELVEVDSGSIDLNSTNMWTRRGLSTDDLWQ.

Functionally, protein of unknown function; part of the gene cluster that mediates the biosynthesis of siderophore ferrichrome A which is contributing to organismal virulence. In Mycosarcoma maydis (Corn smut fungus), this protein is Fe-regulated protein 8.